A 313-amino-acid chain; its full sequence is Ribosomal RNA small subunit methyltransferase H (313 aa).

Residues 35–37, D55, F80, D102, and Q109 each bind S-adenosyl-L-methionine; that span reads GGH.

The protein belongs to the methyltransferase superfamily. RsmH family.

Its subcellular location is the cytoplasm. It carries out the reaction cytidine(1402) in 16S rRNA + S-adenosyl-L-methionine = N(4)-methylcytidine(1402) in 16S rRNA + S-adenosyl-L-homocysteine + H(+). Its function is as follows. Specifically methylates the N4 position of cytidine in position 1402 (C1402) of 16S rRNA. In Shewanella putrefaciens (strain CN-32 / ATCC BAA-453), this protein is Ribosomal RNA small subunit methyltransferase H.